The primary structure comprises 315 residues: Transaldolase (315 aa).

Lys125 functions as the Schiff-base intermediate with substrate in the catalytic mechanism.

This sequence belongs to the transaldolase family. Type 1 subfamily. As to quaternary structure, homodimer.

It is found in the cytoplasm. The catalysed reaction is D-sedoheptulose 7-phosphate + D-glyceraldehyde 3-phosphate = D-erythrose 4-phosphate + beta-D-fructose 6-phosphate. Its pathway is carbohydrate degradation; pentose phosphate pathway; D-glyceraldehyde 3-phosphate and beta-D-fructose 6-phosphate from D-ribose 5-phosphate and D-xylulose 5-phosphate (non-oxidative stage): step 2/3. In terms of biological role, transaldolase is important for the balance of metabolites in the pentose-phosphate pathway. In Paracidovorax citrulli (strain AAC00-1) (Acidovorax citrulli), this protein is Transaldolase.